Reading from the N-terminus, the 425-residue chain is Trigger factor (425 aa).

The region spanning 158–231 (GDLVRVNMEV…VEEVYKRTLP (74 aa)) is the PPIase FKBP-type domain.

It belongs to the FKBP-type PPIase family. Tig subfamily.

The protein localises to the cytoplasm. The enzyme catalyses [protein]-peptidylproline (omega=180) = [protein]-peptidylproline (omega=0). Involved in protein export. Acts as a chaperone by maintaining the newly synthesized protein in an open conformation. Functions as a peptidyl-prolyl cis-trans isomerase. In Thermotoga maritima (strain ATCC 43589 / DSM 3109 / JCM 10099 / NBRC 100826 / MSB8), this protein is Trigger factor (tig).